The chain runs to 260 residues: Ribosomal RNA small subunit methyltransferase G (260 aa).

S-adenosyl-L-methionine is bound by residues Gly111, Phe116, and Arg181.

It belongs to the methyltransferase superfamily. RNA methyltransferase RsmG family.

It is found in the cytoplasm. It carries out the reaction guanosine(527) in 16S rRNA + S-adenosyl-L-methionine = N(7)-methylguanosine(527) in 16S rRNA + S-adenosyl-L-homocysteine. In terms of biological role, specifically methylates the N7 position of guanine in position 527 of 16S rRNA. The protein is Ribosomal RNA small subunit methyltransferase G of Nitrobacter hamburgensis (strain DSM 10229 / NCIMB 13809 / X14).